The sequence spans 181 residues: Inner membrane-spanning protein YciB (181 aa).

The next 5 helical transmembrane spans lie at 8-28 (FPIICFFVAYKFWGIYIATAA), 53-73 (ITLIFILLLGSFTLVFHNAIF), 76-96 (WKPTIVYWIFAIVLFGSHFFG), 121-141 (LSWALFFLILGVLNLFVVYNF), and 149-169 (FKLFGTLALMLVFILGQAFYI).

The protein belongs to the YciB family.

The protein resides in the cell inner membrane. Plays a role in cell envelope biogenesis, maintenance of cell envelope integrity and membrane homeostasis. The polypeptide is Inner membrane-spanning protein YciB (Coxiella burnetii (strain CbuK_Q154) (Coxiella burnetii (strain Q154))).